Reading from the N-terminus, the 158-residue chain is Cyclic pyranopterin monophosphate synthase (158 aa).

Residues 74–76 (MCH) and 112–113 (ME) each bind substrate. Asp127 is an active-site residue.

The protein belongs to the MoaC family. Homohexamer; trimer of dimers.

It catalyses the reaction (8S)-3',8-cyclo-7,8-dihydroguanosine 5'-triphosphate = cyclic pyranopterin phosphate + diphosphate. The protein operates within cofactor biosynthesis; molybdopterin biosynthesis. In terms of biological role, catalyzes the conversion of (8S)-3',8-cyclo-7,8-dihydroguanosine 5'-triphosphate to cyclic pyranopterin monophosphate (cPMP). The sequence is that of Cyclic pyranopterin monophosphate synthase from Thermoanaerobacter pseudethanolicus (strain ATCC 33223 / 39E) (Clostridium thermohydrosulfuricum).